A 46-amino-acid chain; its full sequence is MFFIRARFIGFLDVHGYLAAKKGQQVMRSGSSMWVGSQGPIFYKVF.

The chain is Late transcription unit A protein (ltuA) from Chlamydia muridarum (strain MoPn / Nigg).